Consider the following 325-residue polypeptide: GMP reductase (325 aa).

The active-site Thioimidate intermediate is C173. 202–225 (IIADGGIRSHGDIAKSIRFGATMV) provides a ligand contact to NADP(+).

This sequence belongs to the IMPDH/GMPR family. GuaC type 2 subfamily.

It carries out the reaction IMP + NH4(+) + NADP(+) = GMP + NADPH + 2 H(+). Functionally, catalyzes the irreversible NADPH-dependent deamination of GMP to IMP. It functions in the conversion of nucleobase, nucleoside and nucleotide derivatives of G to A nucleotides, and in maintaining the intracellular balance of A and G nucleotides. The sequence is that of GMP reductase from Paracidovorax citrulli (strain AAC00-1) (Acidovorax citrulli).